A 953-amino-acid polypeptide reads, in one-letter code: MMSSLSVEGMLLKSARESCLPARVNQRRNGDLRRLNHHRQSSFVRCLTPARVSRPELRSSGLTPPRAVLNPVSPPVTTAKKRVFTFGKGRSEGNRDMKSLLGGKGANLAEMSSIGLSVPPGLTISTEACEEYQQNGKSLPPGLWDEISEGLDYVQKEMSASLGDPSKPLLLSVRSGAAISMPGMMDTVLNLGLNDEVVAGLAGKSGARFAYDSYRRFLDMFGNVVMGIPHSLFDEKLEQMKAEKGIHLDTDLTAADLKDLVEKYKNVYVEAKGEKFPTDPKKQLELAVNAVFDSWDSPRANKYRSINQITGLKGTAVNIQSMVFGNMGNTSGTGVLFTRNPSTGEKKLYGEFLINAQGEDVVAGIRTPEDLGTMETCMPEAYKELVENCEILERHYKDMMDIEFTVQENRLWMLQCRTGKRTGKGAVRIAVDMVNEGLIDTRTAIKRVETQHLDQLLHPQFEDPSAYKSHVVATGLPASPGAAVGQVCFSAEDAETWHAQGKSAILVRTETSPEDVGGMHAAAGILTARGGMTSHAAVVARGWGKCCVSGCADIRVNDDMKIFTIGDRVIKEGDWLSLNGTTGEVILGKQLLAPPAMSNDLEIFMSWADQARRLKVMANADTPNDALTARNNGAQGIGLCRTEHMFFASDERIKAVRKMIMAVTPEQRKVALDLLLPYQRSDFEGIFRAMDGLPVTIRLLDPPLHEFLPEGDLEHIVNELAVDTGMSADEIYSKIENLSEVNPMLGFRGCRLGISYPELTEMQVRAIFQAAVSMTNQGVTVIPEIMVPLVGTPQELRHQISVIRGVAANVFAEMGVTLEYKVGTMIEIPRAALIAEEIGKEADFFSFGTNDLTQMTFGYSRDDVGKFLQIYLAQGILQHDPFEVIDQKGVGQLIKMATEKGRAANPSLKVGICGEHGGEPSSVAFFDGVGLDYVSCSPFRVPIARLAAAQVIV.

The transit peptide at 1 to 77 (MMSSLSVEGM…VLNPVSPPVT (77 aa)) directs the protein to the chloroplast. Residues 55 to 74 (PELRSSGLTPPRAVLNPVSP) form a disordered region. Residue threonine 533 is modified to Phosphothreonine; by PDRP1. Histidine 535 (tele-phosphohistidine intermediate) is an active-site residue. The substrate site is built by arginine 641, arginine 698, glutamate 827, glycine 848, threonine 849, asparagine 850, and aspartate 851. Glutamate 827 is a binding site for Mg(2+). Aspartate 851 is a Mg(2+) binding site. Cysteine 913 functions as the Proton donor in the catalytic mechanism.

This sequence belongs to the PEP-utilizing enzyme family. In terms of assembly, homotetramer. The cofactor is Mg(2+). In terms of processing, phosphorylation of Thr-533 in the dark inactivates the enzyme. Dephosphorylation upon light stimulation reactivates the enzyme. In terms of tissue distribution, isoform 1 mainly localized in mesophyll cells and only a low level is found in bundle sheath cells. Isoform 2 is expressed in roots and stems.

The protein resides in the plastid. The protein localises to the chloroplast. Its subcellular location is the cytoplasm. It carries out the reaction pyruvate + phosphate + ATP = phosphoenolpyruvate + AMP + diphosphate + H(+). It functions in the pathway photosynthesis; C4 acid pathway. With respect to regulation, activated by light-induced dephosphorylation. Inhibited by dark-induced phosphorylation. Both reactions are catalyzed by PDRP1. In terms of biological role, formation of phosphoenolpyruvate, which is the primary acceptor of CO(2) in C4 and some Crassulacean acid metabolism plants. The polypeptide is Pyruvate, phosphate dikinase, chloroplastic (PPDK) (Flaveria trinervia (Clustered yellowtops)).